A 493-amino-acid polypeptide reads, in one-letter code: 3-octaprenyl-4-hydroxybenzoate carboxy-lyase (493 aa).

Position 175 (Asn175) interacts with Mn(2+). Prenylated FMN is bound by residues 178–180, 192–194, and 197–198; these read IYR, RWL, and RG. Glu241 serves as a coordination point for Mn(2+). Catalysis depends on Asp290, which acts as the Proton donor.

Belongs to the UbiD family. Homohexamer. The cofactor is prenylated FMN. Mn(2+) serves as cofactor.

Its subcellular location is the cell membrane. The enzyme catalyses a 4-hydroxy-3-(all-trans-polyprenyl)benzoate + H(+) = a 2-(all-trans-polyprenyl)phenol + CO2. Its pathway is cofactor biosynthesis; ubiquinone biosynthesis. Functionally, catalyzes the decarboxylation of 3-octaprenyl-4-hydroxy benzoate to 2-octaprenylphenol, an intermediate step in ubiquinone biosynthesis. The polypeptide is 3-octaprenyl-4-hydroxybenzoate carboxy-lyase (Photorhabdus laumondii subsp. laumondii (strain DSM 15139 / CIP 105565 / TT01) (Photorhabdus luminescens subsp. laumondii)).